A 386-amino-acid polypeptide reads, in one-letter code: Endonuclease III homolog 2, chloroplastic (386 aa).

A chloroplast-targeting transit peptide spans 1-50; it reads MILTGAASTFPIVARVLNAMNRRMYAATTLSSAKSISAESLNLRSDSNSE. The interval 44–66 is disordered; that stretch reads RSDSNSEAAHGASESETRVSLRK. Residues 252–278 form the HhH domain; sequence YDGDIPRTLEELLSLPGVGPKIAHLVL. The active-site Nucleophile; for N-glycosylase activity is the lysine 272. [4Fe-4S] cluster contacts are provided by cysteine 347, cysteine 354, cysteine 357, and cysteine 363.

It belongs to the Nth/MutY family. It depends on [4Fe-4S] cluster as a cofactor.

Its subcellular location is the plastid. The protein localises to the chloroplast stroma. The protein resides in the chloroplast nucleoid. It catalyses the reaction 2'-deoxyribonucleotide-(2'-deoxyribose 5'-phosphate)-2'-deoxyribonucleotide-DNA = a 3'-end 2'-deoxyribonucleotide-(2,3-dehydro-2,3-deoxyribose 5'-phosphate)-DNA + a 5'-end 5'-phospho-2'-deoxyribonucleoside-DNA + H(+). Functionally, bifunctional DNA N-glycosylase with associated apurinic/apyrimidinic (AP) lyase function that catalyzes the first step in base excision repair (BER), the primary repair pathway for the repair of oxidative DNA damage. The DNA N-glycosylase activity releases the damaged DNA base from DNA by cleaving the N-glycosidic bond, leaving an AP site. The AP lyase activity cleaves the phosphodiester bond 3' to the AP site by a beta-elimination. Primarily recognizes and repairs oxidative base damage of pyrimidines. The polypeptide is Endonuclease III homolog 2, chloroplastic (NTH2) (Arabidopsis thaliana (Mouse-ear cress)).